Reading from the N-terminus, the 329-residue chain is DNA repair protein RAD51 homolog 4 (329 aa).

A preferentially binds ssDNA region spans residues M1–S83. The interaction with XRCC2 stretch occupies residues L4 to T77. Residues T77–Q328 are interaction with RAD51C. G107–T114 lines the ATP pocket.

This sequence belongs to the RecA family. RAD51 subfamily. Part of the BCDX2 complex consisting of RAD51B, RAD51C, RAD51D and XRCC2; the complex has a ring-like structure arranged into a flat disc around a central channel. In the absence of DNA, the BCDX2 subcomplex XRCC2:RAD51D formed a multimeric ring structure; in the presence of single-stranded DNA it formed a filamentous structure with the ssDNA. Interacts with SWSAP1 and ZSWIM7; involved in homologous recombination repair. Interacts with BLM; required for stimulation of BLM activity by the BCDX2 subcomplex XRCC2:RAD51D. In terms of tissue distribution, highly expressed in brain followed by testis. Also expressed in heart, liver, kidney, spleen, lung and skeletal muscle.

It is found in the nucleus. The protein resides in the chromosome. It localises to the telomere. Its function is as follows. Involved in the homologous recombination repair (HRR) pathway of double-stranded DNA breaks arising during DNA replication or induced by DNA-damaging agents. Bind to single-stranded DNA (ssDNA) and has DNA-dependent ATPase activity. Part of the RAD51 paralog protein complex BCDX2 which acts in the BRCA1-BRCA2-dependent HR pathway. Upon DNA damage, BCDX2 acts downstream of BRCA2 recruitment and upstream of RAD51 recruitment. BCDX2 binds predominantly to the intersection of the four duplex arms of the Holliday junction and to junction of replication forks. The BCDX2 complex was originally reported to bind single-stranded DNA, single-stranded gaps in duplex DNA and specifically to nicks in duplex DNA. Involved in telomere maintenance. The BCDX2 subcomplex XRCC2:RAD51D can stimulate Holliday junction resolution by BLM. In Mus musculus (Mouse), this protein is DNA repair protein RAD51 homolog 4 (Rad51d).